The following is a 560-amino-acid chain: Glutamate--tRNA ligase, chloroplastic/mitochondrial (560 aa).

47 to 49 (RFA) serves as a coordination point for L-glutamate. Residues 50 to 60 (PSPTGNLHVGG) carry the 'HIGH' region motif. Position 57 (His-57) interacts with ATP. Residues Glu-83, 235–239 (YNFCV), and Arg-253 each bind L-glutamate. ATP contacts are provided by residues Glu-256 and 291-295 (KLSKR). Residues 291–295 (KLSKR) carry the 'KMSKS' region motif.

It belongs to the class-I aminoacyl-tRNA synthetase family. Glutamate--tRNA ligase type 1 subfamily.

It is found in the plastid. It localises to the chloroplast. The protein localises to the mitochondrion. The catalysed reaction is tRNA(Glu) + L-glutamate + ATP = L-glutamyl-tRNA(Glu) + AMP + diphosphate. In terms of biological role, catalyzes the attachment of glutamate to tRNA(Glu) in a two-step reaction: glutamate is first activated by ATP to form Glu-AMP and then transferred to the acceptor end of tRNA(Glu). In Hordeum vulgare (Barley), this protein is Glutamate--tRNA ligase, chloroplastic/mitochondrial.